The sequence spans 207 residues: Small ribosomal subunit protein uS4c (207 aa).

One can recognise an S4 RNA-binding domain in the interval 92–153 (MRLDNILFRL…PKTYQSILSK (62 aa)).

The protein belongs to the universal ribosomal protein uS4 family. Part of the 30S ribosomal subunit. Contacts protein S5. The interaction surface between S4 and S5 is involved in control of translational fidelity.

It is found in the plastid. The protein resides in the chloroplast. One of the primary rRNA binding proteins, it binds directly to 16S rRNA where it nucleates assembly of the body of the 30S subunit. Functionally, with S5 and S12 plays an important role in translational accuracy. The protein is Small ribosomal subunit protein uS4c (rps4) of Equisetum hyemale (Dutch rush).